We begin with the raw amino-acid sequence, 194 residues long: MSDVKAIIGLGNPGTEYDATRHNAGAWVVEALARDSLTPLRAERKFLGQYAKVRYAGHDVHLLVPSTYMNRSGKAVAALCQFFKLTPDELLIAHDELDIAPGTARYKHGGGHGGHNGLRDTVSALGNDKSFHRLRIGIGHPGSAKQVVNYVLGRPGKAERAAIDAAIDECLRTLPDVLDGNWAGAMNRLHSFNA.

TRNA is bound at residue tyrosine 17. Histidine 22 (proton acceptor) is an active-site residue. TRNA is bound by residues tyrosine 68, asparagine 70, and asparagine 116.

Belongs to the PTH family. In terms of assembly, monomer.

It localises to the cytoplasm. It carries out the reaction an N-acyl-L-alpha-aminoacyl-tRNA + H2O = an N-acyl-L-amino acid + a tRNA + H(+). Functionally, hydrolyzes ribosome-free peptidyl-tRNAs (with 1 or more amino acids incorporated), which drop off the ribosome during protein synthesis, or as a result of ribosome stalling. Its function is as follows. Catalyzes the release of premature peptidyl moieties from peptidyl-tRNA molecules trapped in stalled 50S ribosomal subunits, and thus maintains levels of free tRNAs and 50S ribosomes. In Chromohalobacter salexigens (strain ATCC BAA-138 / DSM 3043 / CIP 106854 / NCIMB 13768 / 1H11), this protein is Peptidyl-tRNA hydrolase.